The primary structure comprises 360 residues: Phospho-N-acetylmuramoyl-pentapeptide-transferase (360 aa).

10 consecutive transmembrane segments (helical) span residues 26 to 46 (AILG…KMIA), 73 to 93 (TMGG…WGDL), 97 to 117 (YVWV…IDDY), 132 to 152 (WKYL…YASA), 168 to 188 (VMPQ…VGSS), 199 to 219 (GLAI…AYLS), 236 to 256 (AGEL…FLWF), 263 to 283 (VFMG…IAVL), 288 to 308 (ILLV…ILQV), and 338 to 358 (VIVR…ATLK).

This sequence belongs to the glycosyltransferase 4 family. MraY subfamily. Mg(2+) serves as cofactor.

The protein resides in the cell inner membrane. The catalysed reaction is UDP-N-acetyl-alpha-D-muramoyl-L-alanyl-gamma-D-glutamyl-meso-2,6-diaminopimeloyl-D-alanyl-D-alanine + di-trans,octa-cis-undecaprenyl phosphate = di-trans,octa-cis-undecaprenyl diphospho-N-acetyl-alpha-D-muramoyl-L-alanyl-D-glutamyl-meso-2,6-diaminopimeloyl-D-alanyl-D-alanine + UMP. Its pathway is cell wall biogenesis; peptidoglycan biosynthesis. Functionally, catalyzes the initial step of the lipid cycle reactions in the biosynthesis of the cell wall peptidoglycan: transfers peptidoglycan precursor phospho-MurNAc-pentapeptide from UDP-MurNAc-pentapeptide onto the lipid carrier undecaprenyl phosphate, yielding undecaprenyl-pyrophosphoryl-MurNAc-pentapeptide, known as lipid I. The polypeptide is Phospho-N-acetylmuramoyl-pentapeptide-transferase (Shewanella halifaxensis (strain HAW-EB4)).